The following is a 368-amino-acid chain: Large ribosomal subunit protein bL27m (368 aa).

The N-terminal 20 residues, 1–20 (MFSGLHTSKYACQVVVQIRT), are a transit peptide targeting the mitochondrion. Residues 23 to 44 (KRAAGSRTSMKDSAGRRLGPKK) are disordered. Residues 31-44 (SMKDSAGRRLGPKK) are compositionally biased toward basic and acidic residues.

This sequence belongs to the bacterial ribosomal protein bL27 family.

The protein resides in the mitochondrion. Component of the large subunit of mitochondrial ribosome. The protein is Large ribosomal subunit protein bL27m (MRPL2) of Candida glabrata (strain ATCC 2001 / BCRC 20586 / JCM 3761 / NBRC 0622 / NRRL Y-65 / CBS 138) (Yeast).